A 331-amino-acid polypeptide reads, in one-letter code: Probable allantoicase (331 aa).

This sequence belongs to the allantoicase family.

It carries out the reaction allantoate + H2O = (S)-ureidoglycolate + urea. Its pathway is nitrogen metabolism; (S)-allantoin degradation; (S)-ureidoglycolate from allantoate (aminidohydrolase route): step 1/1. This chain is Probable allantoicase, found in Pseudomonas fluorescens (strain ATCC BAA-477 / NRRL B-23932 / Pf-5).